Here is a 156-residue protein sequence, read N- to C-terminus: Low molecular weight protein-tyrosine-phosphatase YfkJ (156 aa).

Cysteine 8 acts as the Nucleophile in catalysis. Arginine 14 is an active-site residue. Aspartate 125 functions as the Proton donor in the catalytic mechanism.

It belongs to the low molecular weight phosphotyrosine protein phosphatase family.

It carries out the reaction O-phospho-L-tyrosyl-[protein] + H2O = L-tyrosyl-[protein] + phosphate. With respect to regulation, efficiently inhibited by Cu(2+) ion, Zn(2+) ion and N-ethylmaleimide, while the addition of Mg(2+), Ca(2+) or Fe(3+) ions has minimal effect. Inhibited in a competitive manner by vanadate. In terms of biological role, dephosphorylates the phosphotyrosine-containing proteins. Involved in ethanol stress resistance. The protein is Low molecular weight protein-tyrosine-phosphatase YfkJ (yfkJ) of Bacillus subtilis (strain 168).